The sequence spans 284 residues: Tropomyosin alpha-1 chain (284 aa).

Methionine 1 bears the N-acetylmethionine mark. A disordered region spans residues 1-38 (MDAIKKKMQMLKLDKENALDRAEQAEADKKAAEDRSKQ). Residues 1-284 (MDAIKKKMQM…DHALNDMTSI (284 aa)) are a coiled coil. Residues 12-38 (KLDKENALDRAEQAEADKKAAEDRSKQ) are compositionally biased toward basic and acidic residues. Serine 45 carries the phosphoserine modification. The disordered stretch occupies residues 116 to 136 (AEKAADESERGMKVIESRAQK). A phosphoserine mark is found at serine 174, serine 186, serine 206, and serine 252. Tyrosine 261 carries the phosphotyrosine modification. Residues serine 271 and serine 283 each carry the phosphoserine modification.

It belongs to the tropomyosin family. In terms of assembly, homodimer. Heterodimer of an alpha (TPM1, TPM3 or TPM4) and a beta (TPM2) chain. Interacts with HRG (via the HRR domain); the interaction contributes to the antiangiogenic properties of the histidine/proline-rich region (HRR) of HRG. Interacts (via N-terminus) with LMOD2 (via N-terminus) and TMOD1 (via N-terminus). Phosphorylated at Ser-283 by DAPK1 in response to oxidative stress and this phosphorylation enhances stress fiber formation in endothelial cells.

Its subcellular location is the cytoplasm. The protein localises to the cytoskeleton. Functionally, binds to actin filaments in muscle and non-muscle cells. Plays a central role, in association with the troponin complex, in the calcium dependent regulation of vertebrate striated muscle contraction. Smooth muscle contraction is regulated by interaction with caldesmon. In non-muscle cells is implicated in stabilizing cytoskeleton actin filaments. This Mus musculus (Mouse) protein is Tropomyosin alpha-1 chain (Tpm1).